Consider the following 359-residue polypeptide: Protein mab-21-like 2 (359 aa).

Belongs to the mab-21 family.

The protein localises to the nucleus. It is found in the cytoplasm. Its function is as follows. Required for several aspects of embryonic development including normal development of the eye. This is Protein mab-21-like 2 (MAB21L2) from Homo sapiens (Human).